The following is a 160-amino-acid chain: Peripheral myelin protein 22 (160 aa).

Position 1 (Met-1) is a topological domain, cytoplasmic. Residues 2-31 (LLLLLGILFLHIAVLVLLFVSTIVSQWLVG) form a helical membrane-spanning segment. Residues 32–64 (NGHRTDLWQNCTTSALGAVQHCYSSSVSEWLQS) lie on the Extracellular side of the membrane. Residue Asn-41 is glycosylated (N-linked (GlcNAc...) asparagine). Residues 65–91 (VQATMILSVIFSVLSLFLFFCQLFTLT) form a helical membrane-spanning segment. At 92–95 (KGGR) the chain is on the cytoplasmic side. A helical transmembrane segment spans residues 96-119 (FYITGVFQILAGLCVMSAAAIYTV). The Extracellular segment spans residues 120–133 (RHSEWHVNNDYSYG). A helical membrane pass occupies residues 134–156 (FAYILAWVAFPLALLSGIIYVIL). The Cytoplasmic segment spans residues 157 to 160 (RKRE).

This sequence belongs to the PMP-22/EMP/MP20 family. Post-translationally, ubiquitinated by the DCX(DCAF13) E3 ubiquitin ligase complex, leading to its degradation. Found exclusively in the peripheral nervous system. Present in both myelinating and nonmyelinating Schwann cells. Found in the tumors of Schwann cell lineage where axons are present (neurofibromas) but not where axons are absent (schwannomas).

Its subcellular location is the cell membrane. Might be involved in growth regulation, and in myelinization in the peripheral nervous system. The sequence is that of Peripheral myelin protein 22 (Pmp22) from Rattus norvegicus (Rat).